Consider the following 273-residue polypeptide: Probable glycerophosphodiester phosphodiesterase GpdQ (273 aa).

Fe cation-binding residues include Asp-8, His-10, Asp-50, Asn-80, His-154, His-194, and His-196.

The protein belongs to the cyclic nucleotide phosphodiesterase class-III family. The cofactor is Fe(2+).

It catalyses the reaction a sn-glycero-3-phosphodiester + H2O = an alcohol + sn-glycerol 3-phosphate + H(+). The enzyme catalyses sn-glycero-3-phosphoethanolamine + H2O = ethanolamine + sn-glycerol 3-phosphate + H(+). Its function is as follows. Catalyzes the hydrolysis of the 3'-5' phosphodiester bond of glycerophosphodiesters such as glycerophosphorylethanolamine (GPE), a typical phospholipid metabolite. This Arcobacter nitrofigilis (strain ATCC 33309 / DSM 7299 / CCUG 15893 / LMG 7604 / NCTC 12251 / CI) (Campylobacter nitrofigilis) protein is Probable glycerophosphodiester phosphodiesterase GpdQ.